The chain runs to 510 residues: MTTSIIERIDAWAEKTPDFPCYEYAGTRLSYKELKRQSDAFGSFLLKNLNTDKEKPIIVYGHMSPLMLVAFLGSIKSGRAYVPVDVSMPVERIEQIKKAADPSLFICTEELPSNLTITGCPVLTQDQLMDALEKHFGEVPDKEACVKNDDNYYIIYTSGSTGNPKGVQISQNNLVSFSNWILQDFSLSQGLRFLNQAPFSFDLSVMDLYPSLLSGGTLVPLDKTITANMKDLYREIPAQNLDVWVSTPSFADLCLLDDNFNQENNPGLIRFLFCGEVLAKKTASELLNRFPDAVIYNTYGPTEATVAVTQVKVTREVIDAYPSLPLGVIKPDMRLHIVDQETGEVLPEGEKGEIVLIGASVSKGYLNEPEKTDQVFFDYKGYQAYRTGDSGIIKDGYLFFQGRLDFQIKLHGYRIELEDIENNLKKVSYIQNCAIIPKMKDEKVDMLVAQVIPTNHDFEKEYQLSAAIKNELKEFMPAYMIPRKWIYKTEFPLTMNGKIDRKALNSEVNK.

157-158 (TS) serves as a coordination point for ATP. Asp-202 contacts D-alanine. An ATP-binding site is contributed by 297 to 302 (NTYGPT). Residue Val-306 coordinates D-alanine. The ATP site is built by Asp-389 and Lys-498. Residue Lys-498 participates in D-alanine binding.

Belongs to the ATP-dependent AMP-binding enzyme family. DltA subfamily.

The protein localises to the cytoplasm. It catalyses the reaction holo-[D-alanyl-carrier protein] + D-alanine + ATP = D-alanyl-[D-alanyl-carrier protein] + AMP + diphosphate. Its pathway is cell wall biogenesis; lipoteichoic acid biosynthesis. Functionally, catalyzes the first step in the D-alanylation of lipoteichoic acid (LTA), the activation of D-alanine and its transfer onto the D-alanyl carrier protein (Dcp) DltC. In an ATP-dependent two-step reaction, forms a high energy D-alanyl-AMP intermediate, followed by transfer of the D-alanyl residue as a thiol ester to the phosphopantheinyl prosthetic group of the Dcp. D-alanylation of LTA plays an important role in modulating the properties of the cell wall in Gram-positive bacteria, influencing the net charge of the cell wall. The sequence is that of D-alanine--D-alanyl carrier protein ligase from Listeria monocytogenes serotype 4b (strain F2365).